We begin with the raw amino-acid sequence, 420 residues long: Proteasome-activating nucleotidase (420 aa).

Residues Met-1–Glu-25 are disordered. The stretch at Glu-22–Ser-79 forms a coiled coil. ATP contacts are provided by residues Gly-203–Leu-208 and His-342. A docks into pockets in the proteasome alpha-ring to cause gate opening region spans residues Met-418–Val-420.

It belongs to the AAA ATPase family. Homohexamer. The hexameric complex has a two-ring architecture resembling a top hat that caps the 20S proteasome core at one or both ends. Upon ATP-binding, the C-terminus of PAN interacts with the alpha-rings of the proteasome core by binding to the intersubunit pockets.

It localises to the cytoplasm. Its function is as follows. ATPase which is responsible for recognizing, binding, unfolding and translocation of substrate proteins into the archaeal 20S proteasome core particle. Is essential for opening the gate of the 20S proteasome via an interaction with its C-terminus, thereby allowing substrate entry and access to the site of proteolysis. Thus, the C-termini of the proteasomal ATPase function like a 'key in a lock' to induce gate opening and therefore regulate proteolysis. Unfolding activity requires energy from ATP hydrolysis, whereas ATP binding alone promotes ATPase-20S proteasome association which triggers gate opening, and supports translocation of unfolded substrates. In Methanosarcina mazei (strain ATCC BAA-159 / DSM 3647 / Goe1 / Go1 / JCM 11833 / OCM 88) (Methanosarcina frisia), this protein is Proteasome-activating nucleotidase.